Reading from the N-terminus, the 143-residue chain is 3-hydroxyacyl-[acyl-carrier-protein] dehydratase FabZ (143 aa).

The active site involves His49.

It belongs to the thioester dehydratase family. FabZ subfamily.

It is found in the cytoplasm. The enzyme catalyses a (3R)-hydroxyacyl-[ACP] = a (2E)-enoyl-[ACP] + H2O. In terms of biological role, involved in unsaturated fatty acids biosynthesis. Catalyzes the dehydration of short chain beta-hydroxyacyl-ACPs and long chain saturated and unsaturated beta-hydroxyacyl-ACPs. The polypeptide is 3-hydroxyacyl-[acyl-carrier-protein] dehydratase FabZ (Ehrlichia chaffeensis (strain ATCC CRL-10679 / Arkansas)).